The primary structure comprises 630 residues: Molybdenum cofactor biosynthesis protein 1 (630 aa).

Positions 61–298 constitute a Radical SAM core domain; sequence RFNRHHTYLR…SKTYHVPGFK (238 aa). Arg-70 lines the GTP pocket. [4Fe-4S] cluster contacts are provided by Cys-77 and Cys-81. An S-adenosyl-L-methionine-binding site is contributed by Tyr-83. Cys-84 is a [4Fe-4S] cluster binding site. Arg-120 contributes to the GTP binding site. Residue Gly-124 coordinates S-adenosyl-L-methionine. Residue Thr-151 participates in GTP binding. Position 175 (Ser-175) interacts with S-adenosyl-L-methionine. GTP is bound at residue Lys-212. An S-adenosyl-L-methionine-binding site is contributed by Met-246. Residues Cys-312 and Cys-315 each coordinate [4Fe-4S] cluster. Residue 317–319 participates in GTP binding; sequence RLR. Cys-329 serves as a coordination point for [4Fe-4S] cluster. The interval 402-629 is molybdenum cofactor biosynthesis protein C; that stretch reads KEVKNYLLKL…GGKSSSPQIT (228 aa). Asp-599 functions as the For molybdenum cofactor biosynthesis protein C activity in the catalytic mechanism.

The protein in the C-terminal section; belongs to the MoaC family. This sequence in the N-terminal section; belongs to the radical SAM superfamily. MoaA family. As to quaternary structure, isoform mocs1a and isoform mocs1b probably form a heterooligomer. [4Fe-4S] cluster serves as cofactor.

It carries out the reaction GTP + AH2 + S-adenosyl-L-methionine = (8S)-3',8-cyclo-7,8-dihydroguanosine 5'-triphosphate + 5'-deoxyadenosine + L-methionine + A + H(+). It catalyses the reaction (8S)-3',8-cyclo-7,8-dihydroguanosine 5'-triphosphate = cyclic pyranopterin phosphate + diphosphate. Its pathway is cofactor biosynthesis; molybdopterin biosynthesis. Its function is as follows. Isoform mocs1a and isoform mocs1b probably form a complex that catalyzes the conversion of 5'-GTP to cyclic pyranopterin monophosphate (cPMP). mocs1a catalyzes the cyclization of GTP to (8S)-3',8-cyclo-7,8-dihydroguanosine 5'-triphosphate and mocs1b catalyzes the subsequent conversion of (8S)-3',8-cyclo-7,8-dihydroguanosine 5'-triphosphate to cPMP. In Dictyostelium discoideum (Social amoeba), this protein is Molybdenum cofactor biosynthesis protein 1 (mocs1).